The chain runs to 342 residues: MQYSSRFLELNIPDSFLNINKIPDATKFITVTYICLTATLFCIRRSLYNKLVLEDPNLDYNLITSPLLQMVPSQIWRYPTSLVLSNFIDTKAWKVVVNLLNLIIGGSFIERNWNSSKEMFKFIIVLGSLTNVLIIMLTLLVSFFSNKVRLDIPLDGNYTILIGFPIIYRQLLPETTIIHLKTPQFLAKNFRFKLLPIFVMFTMTVTQIIWFHHFAQLFSIWVTFFASWSYLRFFQKLAPLNCPSLPTTNSQGGQEILVGDASDTFQLIYFFPDLIKPILRPIFNFIYNVVVVKFKVIKPFHDIDIDIGNTIAESRGAKKIMTVEERRRQLALQVLEERMVNP.

At 1–21 (MQYSSRFLELNIPDSFLNINK) the chain is on the cytoplasmic side. Residues 22–42 (IPDATKFITVTYICLTATLFC) traverse the membrane as a helical segment. Over 43 to 121 (IRRSLYNKLV…NWNSSKEMFK (79 aa)) the chain is Lumenal. Asparagine 114 carries an N-linked (GlcNAc...) asparagine glycan. Residues 122 to 142 (FIIVLGSLTNVLIIMLTLLVS) traverse the membrane as a helical segment. Over 143–159 (FFSNKVRLDIPLDGNYT) the chain is Cytoplasmic. The chain crosses the membrane as a helical span at residues 160–180 (ILIGFPIIYRQLLPETTIIHL). Residues 181 to 207 (KTPQFLAKNFRFKLLPIFVMFTMTVTQ) lie on the Lumenal side of the membrane. Residues 208 to 228 (IIWFHHFAQLFSIWVTFFASW) form a helical membrane-spanning segment. Residues 229–342 (SYLRFFQKLA…QVLEERMVNP (114 aa)) are Cytoplasmic-facing.

The protein belongs to the TMEM115 family. In terms of assembly, homooligomer.

It is found in the golgi apparatus membrane. Its function is as follows. May play a role in retrograde transport of proteins from the Golgi to the endoplasmic reticulum. The polypeptide is Transmembrane protein 115 homolog (Saccharomyces cerevisiae (strain ATCC 204508 / S288c) (Baker's yeast)).